A 304-amino-acid polypeptide reads, in one-letter code: UDP-3-O-acyl-N-acetylglucosamine deacetylase (304 aa).

Positions 78, 237, and 241 each coordinate Zn(2+). His264 serves as the catalytic Proton donor.

Belongs to the LpxC family. Zn(2+) serves as cofactor.

The catalysed reaction is a UDP-3-O-[(3R)-3-hydroxyacyl]-N-acetyl-alpha-D-glucosamine + H2O = a UDP-3-O-[(3R)-3-hydroxyacyl]-alpha-D-glucosamine + acetate. The protein operates within glycolipid biosynthesis; lipid IV(A) biosynthesis; lipid IV(A) from (3R)-3-hydroxytetradecanoyl-[acyl-carrier-protein] and UDP-N-acetyl-alpha-D-glucosamine: step 2/6. In terms of biological role, catalyzes the hydrolysis of UDP-3-O-myristoyl-N-acetylglucosamine to form UDP-3-O-myristoylglucosamine and acetate, the committed step in lipid A biosynthesis. The polypeptide is UDP-3-O-acyl-N-acetylglucosamine deacetylase (Polynucleobacter asymbioticus (strain DSM 18221 / CIP 109841 / QLW-P1DMWA-1) (Polynucleobacter necessarius subsp. asymbioticus)).